We begin with the raw amino-acid sequence, 197 residues long: Putative double homeobox protein 3 (197 aa).

DNA-binding regions (homeobox) lie at residues 46–105 (GRRM…LRQH) and 121–180 (GRRK…WGQS). The disordered stretch occupies residues 102-127 (LRQHRRQSRPWPGRRDPQKGRRKRTA).

This sequence belongs to the paired homeobox family. Expressed in hepatoma Hep3B cells.

It is found in the nucleus. This chain is Putative double homeobox protein 3 (DUX3), found in Homo sapiens (Human).